Consider the following 926-residue polypeptide: Tyrosine-protein phosphatase non-receptor type 4 (926 aa).

Residues 29–312 (VVCNILLLDN…EHHTFFRLDR (284 aa)) form the FERM domain. Disordered regions lie at residues 379–412 (SDDR…TRVR), 429–474 (SEDF…KKNS), and 492–511 (NESF…GGIP). Composition is skewed to polar residues over residues 398–408 (NHRNSSFTQEA) and 432–455 (FVSQ…PSQE). Ser474 carries the phosphoserine modification. Positions 517 to 589 (LIKMKPDENG…DQVVLFIKAS (73 aa)) constitute a PDZ domain. A Tyrosine-protein phosphatase domain is found at 655-911 (VLAQFDQLYR…RFVCEAILKV (257 aa)). Residues Asp820, 852–858 (CSAGIGR), and Gln896 contribute to the substrate site. Cys852 functions as the Phosphocysteine intermediate in the catalytic mechanism.

Belongs to the protein-tyrosine phosphatase family. Non-receptor class subfamily. As to expression, highly expressed in testis. Specifically expressed in spermatocytes and spermatids within seminiferous tubules (at protein level).

The protein resides in the cell membrane. It is found in the cytoplasm. Its subcellular location is the cytoskeleton. It catalyses the reaction O-phospho-L-tyrosyl-[protein] + H2O = L-tyrosyl-[protein] + phosphate. Its function is as follows. Phosphatase that plays a role in immunity, learning, synaptic plasticity or cell homeostasis. Regulates neuronal cell homeostasis by protecting neurons against apoptosis. Negatively regulates TLR4-induced interferon beta production by dephosphorylating adapter TICAM2 and inhibiting subsequent TRAM-TRIF interaction. Dephosphorylates also the immunoreceptor tyrosine-based activation motifs/ITAMs of the TCR zeta subunit and thereby negatively regulates TCR-mediated signaling pathway. May act at junctions between the membrane and the cytoskeleton. The sequence is that of Tyrosine-protein phosphatase non-receptor type 4 (Ptpn4) from Mus musculus (Mouse).